Consider the following 367-residue polypeptide: Trans-enoyl reductase ffsC (367 aa).

55–58 (CDWK) is a binding site for NADP(+). A substrate-binding site is contributed by 143-150 (TGIGTLGL). Residues 203–206 (SAKN), Tyr-221, and 268–269 (LE) each bind NADP(+). A substrate-binding site is contributed by 288 to 292 (GMAIL). 357–358 (VS) serves as a coordination point for NADP(+).

Belongs to the zinc-containing alcohol dehydrogenase family. As to quaternary structure, monomer.

The protein operates within mycotoxin biosynthesis. Trans-enoyl reductase; part of the gene cluster that mediates the biosynthesis of the cytotoxic leucine-containing cytochalasans, including aspochalasin C, aspochalasin E, TMC-169, flavichalasine F, aspergillin PZ, aspochalasin M and flavichalasine G. The first step in the pathway is catalyzed by the hybrid PKS-NRPS ffsA that utilizes 8 units of malonyl-CoA to iteratively assemble the octaketide chain before addition of L-leucine by the C-terminal NRPS modules. Because ffsA lacks a designated enoylreductase (ER) domain, the required activity is provided the enoyl reductase fssC. The methyltransferase (MT) domain of ffsA catalyzes the alpha-methylation at C10 and C14 using S-adenosyl-L-methionine as the methyl-donating cosubstrate. Reduction by the hydrolyase ffsE, followed by dehydration and intra-molecular Diels-Alder cyclization by the Diels-Alderase ffsF then yield the required isoindolone-fused macrocycle. A number of oxidative steps catalyzed by the tailoring cytochrome P450 monooxygenase ffsD, the FAD-linked oxidoreductase ffsJ and the short-chain dehydrogenase/reductase ffsI, are further required to afford the final products. The sequence is that of Trans-enoyl reductase ffsC from Aspergillus flavipes.